We begin with the raw amino-acid sequence, 289 residues long: ATP synthase gamma chain (289 aa).

Belongs to the ATPase gamma chain family. F-type ATPases have 2 components, CF(1) - the catalytic core - and CF(0) - the membrane proton channel. CF(1) has five subunits: alpha(3), beta(3), gamma(1), delta(1), epsilon(1). CF(0) has three main subunits: a, b and c.

It is found in the cell inner membrane. Its function is as follows. Produces ATP from ADP in the presence of a proton gradient across the membrane. The gamma chain is believed to be important in regulating ATPase activity and the flow of protons through the CF(0) complex. The sequence is that of ATP synthase gamma chain from Phocaeicola vulgatus (strain ATCC 8482 / DSM 1447 / JCM 5826 / CCUG 4940 / NBRC 14291 / NCTC 11154) (Bacteroides vulgatus).